The primary structure comprises 171 residues: Laminin subunit beta-1 (171 aa).

The N-terminal stretch at 1–29 (MNGRTQNLWFSTFRLVIVYALFFAKLCFG) is a signal peptide. Cystine bridges form between Cys-59-Cys-69, Cys-72-Cys-81, Cys-84-Cys-100, Cys-103-Cys-118, and Cys-105-Cys-128. Laminin EGF-like domains are found at residues 66-102 (TGVC…VCQR), 103-160 (CQCP…TCKK), and 161-171 (CLCNGNINSAS). A glycan (N-linked (GlcNAc...) asparagine) is linked at Asn-130. Cystine bridges form between Cys-131/Cys-140 and Cys-143/Cys-158.

In terms of assembly, laminin is a complex glycoprotein, consisting of three different polypeptide chains (alpha, beta, gamma), which are bound to each other by disulfide bonds into a cross-shaped molecule comprising one long and three short arms with globules at each end.

Its subcellular location is the secreted. It localises to the extracellular space. It is found in the extracellular matrix. The protein resides in the basement membrane. Functionally, binding to cells via a high affinity receptor, laminin is thought to mediate the attachment, migration and organization of cells into tissues during embryonic development by interacting with other extracellular matrix components. The polypeptide is Laminin subunit beta-1 (Hydra vulgaris (Hydra)).